The primary structure comprises 465 residues: Putative subtilisin-like proteinase 1 (465 aa).

The signal sequence occupies residues 1-17; it reads MILAIISLSVVICREVS. An Inhibitor I9 domain is found at 19–90; sequence YIVMFDQDPS…VKMVVKDSPV (72 aa). The Peptidase S8 domain maps to 115 to 447; that stretch reads PWGLARVGGS…PSLFNANKKK (333 aa). Catalysis depends on charge relay system residues Asp-148 and His-180. Cys-329 and Cys-360 are disulfide-bonded. Ser-386 acts as the Charge relay system in catalysis.

Belongs to the peptidase S8 family.

Its subcellular location is the secreted. The protein localises to the extracellular space. In terms of biological role, may be involved in the degradation of proteins for nutrient acquisition or possess a regulatory function by proteolytic activation of proproteins. This Encephalitozoon cuniculi (strain GB-M1) (Microsporidian parasite) protein is Putative subtilisin-like proteinase 1 (SPL1).